Here is a 392-residue protein sequence, read N- to C-terminus: Telomere-binding protein subunit beta (392 aa).

Residues 234–392 (QQVESVQVQP…ASKASKRSKK (159 aa)) form a disordered region. Positions 247–256 (GGAKGKKKAA) are enriched in basic residues. Low complexity predominate over residues 257-268 (TKSATKKTVAAK). Positions 269-284 (KTAESADVRKSVDKIV) are enriched in basic and acidic residues. Residues 328–343 (SPSGKKSTKTTDQMTM) are compositionally biased toward polar residues. Residues 374-384 (GKASATSGKAS) show a composition bias toward low complexity.

In terms of assembly, heterodimer of an alpha and a beta subunit.

The protein localises to the nucleus. It localises to the chromosome. The protein resides in the telomere. Its function is as follows. May function as protective capping of the single-stranded telomeric overhang. May also participate in telomere length regulation during DNA replication. This Stylonychia mytilus (Ciliate) protein is Telomere-binding protein subunit beta (STY43).